The primary structure comprises 160 residues: Crossover junction endodeoxyribonuclease RuvC (160 aa).

Residues aspartate 9, glutamate 68, and aspartate 141 contribute to the active site. Positions 9, 68, and 141 each coordinate Mg(2+).

It belongs to the RuvC family. As to quaternary structure, homodimer which binds Holliday junction (HJ) DNA. The HJ becomes 2-fold symmetrical on binding to RuvC with unstacked arms; it has a different conformation from HJ DNA in complex with RuvA. In the full resolvosome a probable DNA-RuvA(4)-RuvB(12)-RuvC(2) complex forms which resolves the HJ. The cofactor is Mg(2+).

The protein localises to the cytoplasm. The enzyme catalyses Endonucleolytic cleavage at a junction such as a reciprocal single-stranded crossover between two homologous DNA duplexes (Holliday junction).. In terms of biological role, the RuvA-RuvB-RuvC complex processes Holliday junction (HJ) DNA during genetic recombination and DNA repair. Endonuclease that resolves HJ intermediates. Cleaves cruciform DNA by making single-stranded nicks across the HJ at symmetrical positions within the homologous arms, yielding a 5'-phosphate and a 3'-hydroxyl group; requires a central core of homology in the junction. The consensus cleavage sequence is 5'-(A/T)TT(C/G)-3'. Cleavage occurs on the 3'-side of the TT dinucleotide at the point of strand exchange. HJ branch migration catalyzed by RuvA-RuvB allows RuvC to scan DNA until it finds its consensus sequence, where it cleaves and resolves the cruciform DNA. This chain is Crossover junction endodeoxyribonuclease RuvC, found in Campylobacter jejuni (strain RM1221).